Reading from the N-terminus, the 578-residue chain is Proline--tRNA ligase (578 aa).

The protein belongs to the class-II aminoacyl-tRNA synthetase family. ProS type 1 subfamily. As to quaternary structure, homodimer.

The protein localises to the cytoplasm. The catalysed reaction is tRNA(Pro) + L-proline + ATP = L-prolyl-tRNA(Pro) + AMP + diphosphate. Its function is as follows. Catalyzes the attachment of proline to tRNA(Pro) in a two-step reaction: proline is first activated by ATP to form Pro-AMP and then transferred to the acceptor end of tRNA(Pro). As ProRS can inadvertently accommodate and process non-cognate amino acids such as alanine and cysteine, to avoid such errors it has two additional distinct editing activities against alanine. One activity is designated as 'pretransfer' editing and involves the tRNA(Pro)-independent hydrolysis of activated Ala-AMP. The other activity is designated 'posttransfer' editing and involves deacylation of mischarged Ala-tRNA(Pro). The misacylated Cys-tRNA(Pro) is not edited by ProRS. In Burkholderia lata (strain ATCC 17760 / DSM 23089 / LMG 22485 / NCIMB 9086 / R18194 / 383), this protein is Proline--tRNA ligase.